Consider the following 79-residue polypeptide: Acyl carrier protein (79 aa).

A Carrier domain is found at 2–77; sequence SEIGERVKKI…DAVKFLEKNA (76 aa). Ser-37 bears the O-(pantetheine 4'-phosphoryl)serine mark.

The protein belongs to the acyl carrier protein (ACP) family. In terms of processing, 4'-phosphopantetheine is transferred from CoA to a specific serine of apo-ACP by AcpS. This modification is essential for activity because fatty acids are bound in thioester linkage to the sulfhydryl of the prosthetic group.

Its subcellular location is the cytoplasm. Its pathway is lipid metabolism; fatty acid biosynthesis. In terms of biological role, carrier of the growing fatty acid chain in fatty acid biosynthesis. The chain is Acyl carrier protein from Rhodopseudomonas palustris (strain BisA53).